A 504-amino-acid chain; its full sequence is ATP synthase subunit alpha 1 (504 aa).

Residue 172–179 (GDRQTGKT) coordinates ATP.

Belongs to the ATPase alpha/beta chains family. As to quaternary structure, F-type ATPases have 2 components, CF(1) - the catalytic core - and CF(0) - the membrane proton channel. CF(1) has five subunits: alpha(3), beta(3), gamma(1), delta(1), epsilon(1). CF(0) has three main subunits: a(1), b(2) and c(9-12). The alpha and beta chains form an alternating ring which encloses part of the gamma chain. CF(1) is attached to CF(0) by a central stalk formed by the gamma and epsilon chains, while a peripheral stalk is formed by the delta and b chains.

Its subcellular location is the cell inner membrane. It carries out the reaction ATP + H2O + 4 H(+)(in) = ADP + phosphate + 5 H(+)(out). Functionally, produces ATP from ADP in the presence of a proton gradient across the membrane. The alpha chain is a regulatory subunit. The sequence is that of ATP synthase subunit alpha 1 from Rhodopirellula baltica (strain DSM 10527 / NCIMB 13988 / SH1).